The sequence spans 442 residues: UDP-N-acetylmuramoylalanine--D-glutamate ligase (442 aa).

Residue 113–119 (GSNGKTT) coordinates ATP.

It belongs to the MurCDEF family.

The protein localises to the cytoplasm. It carries out the reaction UDP-N-acetyl-alpha-D-muramoyl-L-alanine + D-glutamate + ATP = UDP-N-acetyl-alpha-D-muramoyl-L-alanyl-D-glutamate + ADP + phosphate + H(+). It functions in the pathway cell wall biogenesis; peptidoglycan biosynthesis. In terms of biological role, cell wall formation. Catalyzes the addition of glutamate to the nucleotide precursor UDP-N-acetylmuramoyl-L-alanine (UMA). In Coxiella burnetii (strain CbuK_Q154) (Coxiella burnetii (strain Q154)), this protein is UDP-N-acetylmuramoylalanine--D-glutamate ligase.